A 495-amino-acid chain; its full sequence is Phenylalanine--tRNA ligase alpha subunit (495 aa).

L-phenylalanine contacts are provided by residues Thr338, 377–379 (QLE), and Tyr417. Glu419 provides a ligand contact to Mg(2+). Phe442 lines the L-phenylalanine pocket.

The protein belongs to the class-II aminoacyl-tRNA synthetase family. Phe-tRNA synthetase alpha subunit type 2 subfamily. As to quaternary structure, tetramer of two alpha and two beta subunits. It depends on Mg(2+) as a cofactor.

Its subcellular location is the cytoplasm. It catalyses the reaction tRNA(Phe) + L-phenylalanine + ATP = L-phenylalanyl-tRNA(Phe) + AMP + diphosphate + H(+). In Methanosarcina mazei (strain ATCC BAA-159 / DSM 3647 / Goe1 / Go1 / JCM 11833 / OCM 88) (Methanosarcina frisia), this protein is Phenylalanine--tRNA ligase alpha subunit.